Here is a 510-residue protein sequence, read N- to C-terminus: MTATPKPLVLIILDGFGHSESHEGNAILAAKMPVMDRLYKTMPNGLISGSGMDVGLPDGQMGNSEVGHMNLGAGRVVYQDFTRVTKAIRDGEFFENPTICAAVDKAVSAGKAVHIMGLLSDGGVHSHQDHLVAMAELAVRRGADKIYLHAFLDGRDTPPRSAKKSLELMDETFARLGKGRIATIIGRYFAMDRDNRWDRVSTAYNLIVDSSAEFHAATGVAGLEAAYARDENDEFVKATRIGEPANVEDGDAVVFMNFRADRARELTRVFVEDDFKDFERARQPKVNYVMLTQYAASIPAPSAFAAGSLKNVLGEYLADNGKTQLRIAETEKYAHVTFFFSGGREEPFPGEERILIPSPKVATYDLQPEMSAPEVTDKIVDAIEHQRYDVIIVNYANGDMVGHSGIMEAAIKAVEYLDVCVGRITDALEKVGGEALITADHGNVEQMTDDATGQAHTAHTSEPVPFVYVGKRQLKVREGGVLADVAPTMLQLLGMEKPQEMTGHSILVEE.

2 residues coordinate Mn(2+): Asp14 and Ser64. Catalysis depends on Ser64, which acts as the Phosphoserine intermediate. Residues His125, 155–156 (RD), Arg187, Arg193, 259–262 (RADR), and Lys332 each bind substrate. Mn(2+)-binding residues include Asp399, His403, Asp440, His441, and His459.

It belongs to the BPG-independent phosphoglycerate mutase family. In terms of assembly, monomer. It depends on Mn(2+) as a cofactor.

It catalyses the reaction (2R)-2-phosphoglycerate = (2R)-3-phosphoglycerate. The protein operates within carbohydrate degradation; glycolysis; pyruvate from D-glyceraldehyde 3-phosphate: step 3/5. Catalyzes the interconversion of 2-phosphoglycerate and 3-phosphoglycerate. Essential for the growth and pathogenicity on the host plant. In Pseudomonas syringae pv. tomato (strain ATCC BAA-871 / DC3000), this protein is 2,3-bisphosphoglycerate-independent phosphoglycerate mutase.